The chain runs to 84 residues: Beta-defensin 119 (84 aa).

Positions 1 to 21 (MKFLFLFLAILLATEVPVISG) are cleaved as a signal peptide. 3 cysteine pairs are disulfide-bonded: Cys-28/Cys-55, Cys-35/Cys-49, and Cys-39/Cys-56.

The protein belongs to the beta-defensin family. As to expression, abundant expression in the male reproductive tract only. Expressed abundantly in testis, while expression in epididymis decreased gradually from caput to cauda.

It is found in the secreted. Has antibacterial activity. This is Beta-defensin 119 (DEFB119) from Macaca mulatta (Rhesus macaque).